The following is a 178-amino-acid chain: Large ribosomal subunit protein uL6 (178 aa).

The protein belongs to the universal ribosomal protein uL6 family. In terms of assembly, part of the 50S ribosomal subunit.

This protein binds to the 23S rRNA, and is important in its secondary structure. It is located near the subunit interface in the base of the L7/L12 stalk, and near the tRNA binding site of the peptidyltransferase center. The sequence is that of Large ribosomal subunit protein uL6 from Lactococcus lactis subsp. cremoris (strain SK11).